Here is a 239-residue protein sequence, read N- to C-terminus: Probable transcriptional regulatory protein BT9727_0453 (239 aa).

Belongs to the TACO1 family. YeeN subfamily.

The protein resides in the cytoplasm. This is Probable transcriptional regulatory protein BT9727_0453 from Bacillus thuringiensis subsp. konkukian (strain 97-27).